The chain runs to 152 residues: MSEKYVVTWDMLQIHARKLAARLMPSEQWKGIIAVSRGGLVPGALLARELGIRHVDTVCISSYDHDNQRELTVLKRAEGDGEGFIVIDDLVDTGGTAVAIRDMYPKAHFVTIFAKPAGQPLVDDYVIDIPQDTWIEQPWDMGVAFVPPISGR.

Residues 37 to 38 (RG), Arg69, and 88 to 96 (DDLVDTGGT) each bind 5-phospho-alpha-D-ribose 1-diphosphate. Residue Arg69 coordinates GMP. Asp89 provides a ligand contact to Mg(2+). The guanine site is built by Asp92 and Ile135. Residues Asp92 and Ile135 each contribute to the xanthine site. Residues 92 to 96 (DTGGT) and 134 to 135 (WI) each bind GMP.

The protein belongs to the purine/pyrimidine phosphoribosyltransferase family. XGPT subfamily. In terms of assembly, homotetramer. Requires Mg(2+) as cofactor.

It localises to the cell inner membrane. The enzyme catalyses GMP + diphosphate = guanine + 5-phospho-alpha-D-ribose 1-diphosphate. It carries out the reaction XMP + diphosphate = xanthine + 5-phospho-alpha-D-ribose 1-diphosphate. The catalysed reaction is IMP + diphosphate = hypoxanthine + 5-phospho-alpha-D-ribose 1-diphosphate. It functions in the pathway purine metabolism; GMP biosynthesis via salvage pathway; GMP from guanine: step 1/1. Its pathway is purine metabolism; XMP biosynthesis via salvage pathway; XMP from xanthine: step 1/1. Purine salvage pathway enzyme that catalyzes the transfer of the ribosyl-5-phosphate group from 5-phospho-alpha-D-ribose 1-diphosphate (PRPP) to the N9 position of the 6-oxopurines guanine and xanthine to form the corresponding ribonucleotides GMP (guanosine 5'-monophosphate) and XMP (xanthosine 5'-monophosphate), with the release of PPi. To a lesser extent, also acts on hypoxanthine. The protein is Xanthine-guanine phosphoribosyltransferase of Enterobacter sp. (strain 638).